We begin with the raw amino-acid sequence, 319 residues long: HTH-type transcriptional regulator YidZ (319 aa).

An HTH lysR-type domain is found at 8–65 (LDLNLLLCLQLLMQERSVTKAAKRMNVTPSAVSKSLAKLRAWFDDPLFVNSPLGLSPT). Residues 25-44 (VTKAAKRMNVTPSAVSKSLA) constitute a DNA-binding region (H-T-H motif).

The protein belongs to the LysR transcriptional regulatory family.

Involved in anaerobic NO protection. The sequence is that of HTH-type transcriptional regulator YidZ from Escherichia coli O157:H7 (strain EC4115 / EHEC).